The chain runs to 640 residues: MTYSLLPHIHSPQDLHALSLDKLPVLCDEIRNKIIESLSLTGGHLASNLGGVELTVALHYVFSSPDDQFIFDVGHQSYVHKLLTGRNTEAFSNIRHDNGLSGFTTPQESNHDIFFSGHAGNALSLALGLAKGSSNSSSHILPILGDAAFSCGLTLEALNNIPADLSKFIIVLNDNQMSISENVGNIPQGISQWIYPQKISKLSQKIHSWIQNLPSFLHKKKTLSHKVDIALKSLSHPLFEQFGLHYVGPIDGHNVKKLVQALQMIKDQPQPILFHVCTVKGNGLTEAERDPIRYHGVKAHFQNTSLKKTSGNVELQTPISFPQHAGNILCRLGKKYPQLQVVTPAMSLGSCLEDFRKQFPDRFTDVGIAEGHAVTFSAGIARSGTPVCCSIYSTFLHRAMDNVFHDVCMQELPVIFAIDRAGLAFHDGRSHHGIYDLGFLCSMPNMVICQPRNALVLERLFFSSLLWKSPCAIRYPNIPANEKASNSSFPFSPILPGEAEILCQGDDLLLIALGHMCNTALTVKEHLLDYGISTTVVDPIFIKPLDRKLLQSLLTHHSKVIILEEHSIHGGLGSEFLLFLNQHNIKADVLSLGVPDMFIPHGNPETILNLIGLTSDHITQRILSHFKFSTPIPIERFFKA.

Residues His-75 and 117–119 each bind thiamine diphosphate; that span reads GHA. Asp-146 serves as a coordination point for Mg(2+). Residues 147–148, Asn-175, and Glu-370 each bind thiamine diphosphate; that span reads AA. Residue Asn-175 participates in Mg(2+) binding.

It belongs to the transketolase family. DXPS subfamily. Homodimer. Mg(2+) serves as cofactor. Requires thiamine diphosphate as cofactor.

It carries out the reaction D-glyceraldehyde 3-phosphate + pyruvate + H(+) = 1-deoxy-D-xylulose 5-phosphate + CO2. It participates in metabolic intermediate biosynthesis; 1-deoxy-D-xylulose 5-phosphate biosynthesis; 1-deoxy-D-xylulose 5-phosphate from D-glyceraldehyde 3-phosphate and pyruvate: step 1/1. Functionally, catalyzes the acyloin condensation reaction between C atoms 2 and 3 of pyruvate and glyceraldehyde 3-phosphate to yield 1-deoxy-D-xylulose-5-phosphate (DXP). The polypeptide is 1-deoxy-D-xylulose-5-phosphate synthase (Chlamydia trachomatis serovar L2 (strain ATCC VR-902B / DSM 19102 / 434/Bu)).